The chain runs to 295 residues: Ribosomal RNA small subunit methyltransferase H (295 aa).

Residues 32–34, D50, F77, D98, and Q105 each bind S-adenosyl-L-methionine; that span reads GGY. The segment at 275–295 is disordered; that stretch reads KEISENTRSRSAKLRGIVKEE.

This sequence belongs to the methyltransferase superfamily. RsmH family.

Its subcellular location is the cytoplasm. It catalyses the reaction cytidine(1402) in 16S rRNA + S-adenosyl-L-methionine = N(4)-methylcytidine(1402) in 16S rRNA + S-adenosyl-L-homocysteine + H(+). Specifically methylates the N4 position of cytidine in position 1402 (C1402) of 16S rRNA. This Anaplasma phagocytophilum (strain HZ) protein is Ribosomal RNA small subunit methyltransferase H.